The sequence spans 226 residues: Urease accessory protein UreF (226 aa).

The protein belongs to the UreF family. UreD, UreF and UreG form a complex that acts as a GTP-hydrolysis-dependent molecular chaperone, activating the urease apoprotein by helping to assemble the nickel containing metallocenter of UreC. The UreE protein probably delivers the nickel.

The protein resides in the cytoplasm. Its function is as follows. Required for maturation of urease via the functional incorporation of the urease nickel metallocenter. The polypeptide is Urease accessory protein UreF (Burkholderia ambifaria (strain MC40-6)).